Here is a 93-residue protein sequence, read N- to C-terminus: Large ribosomal subunit protein eL42 (93 aa).

Residues Cys11 and Cys14 each coordinate Zn(2+). The C4-type zinc finger occupies 11-75 (CPNCDEHHQL…TDLKYRCSEC (65 aa)). The disordered stretch occupies residues 24–62 (KVRSGRSSGMKWDARRTKRANASIGNHGRFSKVPVGNKP). Cys72 and Cys75 together coordinate Zn(2+).

This sequence belongs to the eukaryotic ribosomal protein eL42 family. Part of the 50S ribosomal subunit. Requires Zn(2+) as cofactor.

Binds to the 23S rRNA. This Halobacterium salinarum (strain ATCC 700922 / JCM 11081 / NRC-1) (Halobacterium halobium) protein is Large ribosomal subunit protein eL42.